We begin with the raw amino-acid sequence, 652 residues long: DNA ligase (652 aa).

NAD(+)-binding positions include aspartate 29–aspartate 33, serine 78–leucine 79, and glutamate 107. The active-site N6-AMP-lysine intermediate is the lysine 109. 4 residues coordinate NAD(+): arginine 130, glutamate 164, lysine 278, and lysine 302. Residues cysteine 395, cysteine 398, cysteine 413, and cysteine 418 each contribute to the Zn(2+) site. The 76-residue stretch at valine 577–leucine 652 folds into the BRCT domain.

It belongs to the NAD-dependent DNA ligase family. LigA subfamily. Requires Mg(2+) as cofactor. The cofactor is Mn(2+).

It carries out the reaction NAD(+) + (deoxyribonucleotide)n-3'-hydroxyl + 5'-phospho-(deoxyribonucleotide)m = (deoxyribonucleotide)n+m + AMP + beta-nicotinamide D-nucleotide.. In terms of biological role, DNA ligase that catalyzes the formation of phosphodiester linkages between 5'-phosphoryl and 3'-hydroxyl groups in double-stranded DNA using NAD as a coenzyme and as the energy source for the reaction. It is essential for DNA replication and repair of damaged DNA. This Streptococcus pneumoniae (strain 70585) protein is DNA ligase.